Here is a 497-residue protein sequence, read N- to C-terminus: Serine hydroxymethyltransferase (497 aa).

(6S)-5,6,7,8-tetrahydrofolate contacts are provided by residues Leu-176 and 180-182; that span reads GHL. The residue at position 289 (Lys-289) is an N6-(pyridoxal phosphate)lysine.

This sequence belongs to the SHMT family. Homodimer. Pyridoxal 5'-phosphate serves as cofactor.

The protein resides in the cytoplasm. It carries out the reaction (6R)-5,10-methylene-5,6,7,8-tetrahydrofolate + glycine + H2O = (6S)-5,6,7,8-tetrahydrofolate + L-serine. It participates in one-carbon metabolism; tetrahydrofolate interconversion. The protein operates within amino-acid biosynthesis; glycine biosynthesis; glycine from L-serine: step 1/1. In terms of biological role, catalyzes the reversible interconversion of serine and glycine with tetrahydrofolate (THF) serving as the one-carbon carrier. This reaction serves as the major source of one-carbon groups required for the biosynthesis of purines, thymidylate, methionine, and other important biomolecules. Also exhibits THF-independent aldolase activity toward beta-hydroxyamino acids, producing glycine and aldehydes, via a retro-aldol mechanism. This chain is Serine hydroxymethyltransferase, found in Chlamydia abortus (strain DSM 27085 / S26/3) (Chlamydophila abortus).